The following is a 576-amino-acid chain: RING finger and SPRY domain-containing protein 1 (576 aa).

Residues 1–16 (MIVFGWAVFLASRSLG) form the signal peptide. The residue at position 50 (Ser50) is a Phosphoserine. Residues 50-99 (SGTDDSVDTQQQQAENSAVPTADTRSQPRDPVRPPRRGRGPHEPRRKKQN) are disordered. Residues 57–68 (DTQQQQAENSAV) are compositionally biased toward polar residues. The span at 83–97 (PPRRGRGPHEPRRKK) shows a compositional bias: basic residues. The B30.2/SPRY domain occupies 300-483 (LFLKEGRQLT…CEFNFGAKPF (184 aa)). Asn314 is a glycosylation site (N-linked (GlcNAc...) asparagine). Residues 527 to 562 (CSLCCDEVADTQLKPCGHSDLCMDCALQLETCPLCR) form an RING-type zinc finger.

It localises to the secreted. This is RING finger and SPRY domain-containing protein 1 (RSPRY1) from Homo sapiens (Human).